The sequence spans 722 residues: Pentatricopeptide repeat-containing protein At4g14820 (722 aa).

PPR repeat units lie at residues 75-109 (ESIV…GGRL), 110-140 (DQFS…AFKI), 145-175 (DPFV…MSHR), 176-210 (DVVT…NVMP), 211-245 (DEMI…DVRM), 246-276 (DTHL…MSVR), 277-307 (NLFV…TEKK), 308-342 (DLVC…GIKP), 343-377 (DVVS…GLES), 378-408 (ELSI…MPRR), 409-443 (NVVS…NVEP), 444-479 (NEVT…NITP), and 480-514 (KLEH…SNVV). Residues 515 to 590 (IWGSLMSACR…EKGLSRIDQN (76 aa)) form a type E motif region. The segment at 591 to 621 (GKSHEFLIGDKRHKQSNEIYAKLDEVVSKLK) is type E(+) motif. A type DYW motif region spans residues 622 to 722 (LAGYVPDCGS…NGLCSCRDYW (101 aa)).

It belongs to the PPR family. PCMP-H subfamily.

In Arabidopsis thaliana (Mouse-ear cress), this protein is Pentatricopeptide repeat-containing protein At4g14820 (PCMP-H3).